A 90-amino-acid chain; its full sequence is MSRVVVSVIGQDRTGIVAGISKVLAENNANILDISQTIMDNLFAMIMLVDISNAKVDFATLKKELEKAGEELGVQVIVQHEDIFKYMHRI.

The 75-residue stretch at 5–79 (VVSVIGQDRT…EELGVQVIVQ (75 aa)) folds into the ACT domain.

It belongs to the UPF0237 family.

This chain is UPF0237 protein MJ1558, found in Methanocaldococcus jannaschii (strain ATCC 43067 / DSM 2661 / JAL-1 / JCM 10045 / NBRC 100440) (Methanococcus jannaschii).